Consider the following 346-residue polypeptide: uncharacterized protein (346 aa).

The N-terminal stretch at 1–27 is a signal peptide; the sequence is MKFNKISLSVSTALLAAGLAVSGSANA.

This is an uncharacterized protein from Haemophilus influenzae (strain ATCC 51907 / DSM 11121 / KW20 / Rd).